Consider the following 139-residue polypeptide: Large-conductance mechanosensitive channel (139 aa).

2 helical membrane-spanning segments follow: residues 14 to 34 and 81 to 101; these read VIDL…INSL and GSFL…FMIV.

Belongs to the MscL family. As to quaternary structure, homopentamer.

The protein resides in the cell membrane. Channel that opens in response to stretch forces in the membrane lipid bilayer. May participate in the regulation of osmotic pressure changes within the cell. In Chloroflexus aurantiacus (strain ATCC 29366 / DSM 635 / J-10-fl), this protein is Large-conductance mechanosensitive channel.